The primary structure comprises 142 residues: Dromaiocalcin-2 (142 aa).

3 disulfide bridges follow: C6-C17, C34-C138, and C113-C130. Residues 13–139 enclose the C-type lectin domain; the sequence is FDGRCYGFFP…CSDRKPFICA (127 aa). Residues S62 and S68 each carry the phosphoserine modification.

In terms of processing, a minor form with some unmodified Ser-68 and partial phosphorylation of Ser-66 may also occur.

The protein localises to the secreted. It is found in the extracellular space. The protein resides in the extracellular matrix. The polypeptide is Dromaiocalcin-2 (Dromaius novaehollandiae (Emu)).